The following is an 813-amino-acid chain: Leucine--tRNA ligase (813 aa).

A 'HIGH' region motif is present at residues 41 to 51 (PYPSGTLHMGH). The 'KMSKS' region signature appears at 575–579 (KMSKS). Position 578 (Lys-578) interacts with ATP.

Belongs to the class-I aminoacyl-tRNA synthetase family.

Its subcellular location is the cytoplasm. The enzyme catalyses tRNA(Leu) + L-leucine + ATP = L-leucyl-tRNA(Leu) + AMP + diphosphate. The chain is Leucine--tRNA ligase from Francisella tularensis subsp. tularensis (strain FSC 198).